Reading from the N-terminus, the 96-residue chain is MNEKQLTEAYERDENMMILVFAQWCVNHDLDPMELYAKAYPQQKLNESLKKTMDDLVVPKHEAEHIPDQTVIAVLEMFGNTDLAQALHEAISGRKQ.

This is an uncharacterized protein from Bacillus subtilis (strain 168).